The following is a 152-amino-acid chain: Nucleoside diphosphate kinase A 1 (152 aa).

K12, F60, R88, T94, R105, and N115 together coordinate ATP. H118 (pros-phosphohistidine intermediate) is an active-site residue.

It belongs to the NDK family. Homohexamer. Mg(2+) is required as a cofactor. Post-translationally, the N-terminus is blocked.

It localises to the cytoplasm. The protein resides in the cell membrane. It is found in the nucleus. It carries out the reaction a 2'-deoxyribonucleoside 5'-diphosphate + ATP = a 2'-deoxyribonucleoside 5'-triphosphate + ADP. The catalysed reaction is a ribonucleoside 5'-diphosphate + ATP = a ribonucleoside 5'-triphosphate + ADP. With respect to regulation, autophosphorylation at His-118 increases serine/threonine protein kinase activity of the enzyme. Interaction with the SET complex inhibits exonuclease activity. In terms of biological role, major role in the synthesis of nucleoside triphosphates other than ATP. Possesses nucleoside-diphosphate kinase, serine/threonine-specific protein kinase, geranyl and farnesyl pyrophosphate kinase, histidine protein kinase and 3'-5' exonuclease activities. Involved in cell proliferation, differentiation and development, signal transduction, G protein-coupled receptor endocytosis, and gene expression. Required for neural development including neural patterning and cell fate determination. The chain is Nucleoside diphosphate kinase A 1 (NME1-1) from Bos taurus (Bovine).